Consider the following 228-residue polypeptide: MPKLILCRHGQSEWNAKNLFTGWEDVNLSEQGINEATRAGEKVRENNIAIDVAFTSLLTRALDTTHYILTESKQQWIPVYKSWRLNERHYGGLQGLNKDDARKEFGEEQVHIWRRSYDVKPPAETEEQREAYLADRRYNHLDKRMMPYSESLKDTLVRVIPFWTDHISQYLLDGQTVLVSAHGNSIRALIKYLEDVSDEDIINYEIKTGAPLVYELTDDLEVIDKYYL.

Substrate contacts are provided by residues Arg8 to Asn15, Thr21 to Gly22, Arg60, Glu87 to Tyr90, Lys98, Arg114 to Arg115, and Gly183 to Asn184. His9 acts as the Tele-phosphohistidine intermediate in catalysis. Catalysis depends on Glu87, which acts as the Proton donor/acceptor.

Belongs to the phosphoglycerate mutase family. BPG-dependent PGAM subfamily.

It catalyses the reaction (2R)-2-phosphoglycerate = (2R)-3-phosphoglycerate. The protein operates within carbohydrate degradation; glycolysis; pyruvate from D-glyceraldehyde 3-phosphate: step 3/5. In terms of biological role, catalyzes the interconversion of 2-phosphoglycerate and 3-phosphoglycerate. This is 2,3-bisphosphoglycerate-dependent phosphoglycerate mutase from Staphylococcus aureus (strain Mu3 / ATCC 700698).